Consider the following 166-residue polypeptide: Ribosome maturation factor RimM (166 aa).

The 73-residue stretch at E94–Q166 folds into the PRC barrel domain.

This sequence belongs to the RimM family. As to quaternary structure, binds ribosomal protein uS19.

It is found in the cytoplasm. In terms of biological role, an accessory protein needed during the final step in the assembly of 30S ribosomal subunit, possibly for assembly of the head region. Essential for efficient processing of 16S rRNA. May be needed both before and after RbfA during the maturation of 16S rRNA. It has affinity for free ribosomal 30S subunits but not for 70S ribosomes. The polypeptide is Ribosome maturation factor RimM (Novosphingobium aromaticivorans (strain ATCC 700278 / DSM 12444 / CCUG 56034 / CIP 105152 / NBRC 16084 / F199)).